Here is a 378-residue protein sequence, read N- to C-terminus: Deoxyguanosinetriphosphate triphosphohydrolase-like protein (378 aa).

The region spanning 62 to 198 is the HD domain; that stretch reads RLTHTIEVAQ…AAVADDVAYN (137 aa).

Belongs to the dGTPase family. Type 2 subfamily.

This Paracoccus denitrificans (strain Pd 1222) protein is Deoxyguanosinetriphosphate triphosphohydrolase-like protein.